A 410-amino-acid polypeptide reads, in one-letter code: Toluene 1,2-dioxygenase system ferredoxin--NAD(+) reductase component (410 aa).

4–35 contacts FAD; it reads HVAIIGNGVGGFTTAQALRAEGFEGRISLIGD. Residue 145 to 173 participates in NAD(+) binding; the sequence is RLLIVGGGLIGCEVATTARKLGLSVTILE.

The protein belongs to the bacterial ring-hydroxylating dioxygenase ferredoxin reductase family. As to quaternary structure, this dioxygenase system consists of four proteins: the two subunits of the hydroxylase component (todC1 and todC2), a ferredoxin (TodB) and a ferredoxin reductase (TodA). Requires FAD as cofactor.

It carries out the reaction 2 reduced [2Fe-2S]-[ferredoxin] + NAD(+) + H(+) = 2 oxidized [2Fe-2S]-[ferredoxin] + NADH. The protein operates within xenobiotic degradation; toluene degradation. In terms of biological role, part of the electron transfer component of toluene 1,2-dioxygenase, transfers electrons from ferredoxin (TodB) to NADH. The protein is Toluene 1,2-dioxygenase system ferredoxin--NAD(+) reductase component (todA) of Pseudomonas putida (strain ATCC 700007 / DSM 6899 / JCM 31910 / BCRC 17059 / LMG 24140 / F1).